An 85-amino-acid chain; its full sequence is Neurotoxin BmKAEP2 (85 aa).

An N-terminal signal peptide occupies residues 1 to 21 (MKLFLLLVISASMLIDGLVNA). Positions 22–82 (DGYIRGSNGC…TWKSESNTCG (61 aa)) constitute an LCN-type CS-alpha/beta domain. Disulfide bonds link Cys31–Cys81, Cys35–Cys56, Cys42–Cys63, and Cys46–Cys65.

Belongs to the long (4 C-C) scorpion toxin superfamily. Sodium channel inhibitor family. Beta subfamily. As to expression, expressed by the venom gland.

Its subcellular location is the secreted. Its function is as follows. Depressant insect beta-toxins cause a transient contraction paralysis followed by a slow flaccid paralysis. They bind voltage-independently at site-4 of sodium channels (Nav) and shift the voltage of activation toward more negative potentials thereby affecting sodium channel activation and promoting spontaneous and repetitive firing. This toxin is active only on insects. Has potential anti-epilepsy effect. This chain is Neurotoxin BmKAEP2, found in Olivierus martensii (Manchurian scorpion).